A 292-amino-acid polypeptide reads, in one-letter code: tRNA pseudouridine synthase B (292 aa).

The active-site Nucleophile is the Asp-38.

It belongs to the pseudouridine synthase TruB family. Type 1 subfamily.

The enzyme catalyses uridine(55) in tRNA = pseudouridine(55) in tRNA. Its function is as follows. Responsible for synthesis of pseudouridine from uracil-55 in the psi GC loop of transfer RNAs. This chain is tRNA pseudouridine synthase B, found in Streptococcus sanguinis (strain SK36).